We begin with the raw amino-acid sequence, 452 residues long: Glutamyl-tRNA(Gln) amidotransferase subunit A (452 aa).

Catalysis depends on charge relay system residues lysine 56 and serine 131. The active-site Acyl-ester intermediate is serine 155.

This sequence belongs to the amidase family. GatA subfamily. In terms of assembly, heterotrimer of A, B and C subunits.

The enzyme catalyses L-glutamyl-tRNA(Gln) + L-glutamine + ATP + H2O = L-glutaminyl-tRNA(Gln) + L-glutamate + ADP + phosphate + H(+). Allows the formation of correctly charged Gln-tRNA(Gln) through the transamidation of misacylated Glu-tRNA(Gln) in organisms which lack glutaminyl-tRNA synthetase. The reaction takes place in the presence of glutamine and ATP through an activated gamma-phospho-Glu-tRNA(Gln). In Campylobacter curvus (strain 525.92), this protein is Glutamyl-tRNA(Gln) amidotransferase subunit A.